Reading from the N-terminus, the 600-residue chain is Isocitrate dehydrogenase kinase/phosphatase (600 aa).

ATP contacts are provided by residues 335-341 (APGIRGM) and Lys-356. Asp-390 is an active-site residue.

The protein belongs to the AceK family.

The protein resides in the cytoplasm. It catalyses the reaction L-seryl-[isocitrate dehydrogenase] + ATP = O-phospho-L-seryl-[isocitrate dehydrogenase] + ADP + H(+). Bifunctional enzyme which can phosphorylate or dephosphorylate isocitrate dehydrogenase (IDH) on a specific serine residue. This is a regulatory mechanism which enables bacteria to bypass the Krebs cycle via the glyoxylate shunt in response to the source of carbon. When bacteria are grown on glucose, IDH is fully active and unphosphorylated, but when grown on acetate or ethanol, the activity of IDH declines drastically concomitant with its phosphorylation. In Bordetella parapertussis (strain 12822 / ATCC BAA-587 / NCTC 13253), this protein is Isocitrate dehydrogenase kinase/phosphatase.